The sequence spans 310 residues: Protease HtpX homolog (310 aa).

2 helical membrane passes run 16–36 (NAVL…VDAI) and 55–75 (IFPT…LVCI). His166 provides a ligand contact to Zn(2+). Residue Glu167 is part of the active site. His170 is a binding site for Zn(2+). 2 consecutive transmembrane segments (helical) span residues 182 to 202 (VGIL…FFMG) and 214 to 234 (MILW…QMYL). Glu239 is a Zn(2+) binding site.

It belongs to the peptidase M48B family. It depends on Zn(2+) as a cofactor.

Its subcellular location is the cell inner membrane. The sequence is that of Protease HtpX homolog from Helicobacter pylori (strain J99 / ATCC 700824) (Campylobacter pylori J99).